The primary structure comprises 281 residues: Nhr-229 coiled coil domain containing nccd-1 (281 aa).

The polypeptide is Nhr-229 coiled coil domain containing nccd-1 (Caenorhabditis elegans).